A 307-amino-acid polypeptide reads, in one-letter code: Acetyl-coenzyme A carboxylase carboxyl transferase subunit beta (307 aa).

The interval 1 to 21 (MAMADQRNDKPGRPAAQRERR) is disordered. In terms of domain architecture, CoA carboxyltransferase N-terminal spans 43 to 307 (LWVKCPETGE…MGRERLSPAA (265 aa)).

This sequence belongs to the AccD/PCCB family. As to quaternary structure, acetyl-CoA carboxylase is a heterohexamer composed of biotin carboxyl carrier protein (AccB), biotin carboxylase (AccC) and two subunits each of ACCase subunit alpha (AccA) and ACCase subunit beta (AccD).

The protein resides in the cytoplasm. The enzyme catalyses N(6)-carboxybiotinyl-L-lysyl-[protein] + acetyl-CoA = N(6)-biotinyl-L-lysyl-[protein] + malonyl-CoA. It functions in the pathway lipid metabolism; malonyl-CoA biosynthesis; malonyl-CoA from acetyl-CoA: step 1/1. In terms of biological role, component of the acetyl coenzyme A carboxylase (ACC) complex. Biotin carboxylase (BC) catalyzes the carboxylation of biotin on its carrier protein (BCCP) and then the CO(2) group is transferred by the transcarboxylase to acetyl-CoA to form malonyl-CoA. The protein is Acetyl-coenzyme A carboxylase carboxyl transferase subunit beta of Phenylobacterium zucineum (strain HLK1).